Here is a 276-residue protein sequence, read N- to C-terminus: NADPH-dependent 7-cyano-7-deazaguanine reductase (276 aa).

83–85 (IES) serves as a coordination point for substrate. 85–86 (SK) is a binding site for NADPH. The active-site Thioimide intermediate is C184. The Proton donor role is filled by D191. 223–224 (HE) contacts substrate. Residue 252–253 (RG) coordinates NADPH.

Belongs to the GTP cyclohydrolase I family. QueF type 2 subfamily. In terms of assembly, homodimer.

The protein localises to the cytoplasm. It carries out the reaction 7-aminomethyl-7-carbaguanine + 2 NADP(+) = 7-cyano-7-deazaguanine + 2 NADPH + 3 H(+). It participates in tRNA modification; tRNA-queuosine biosynthesis. Its function is as follows. Catalyzes the NADPH-dependent reduction of 7-cyano-7-deazaguanine (preQ0) to 7-aminomethyl-7-deazaguanine (preQ1). In Pseudomonas savastanoi pv. phaseolicola (strain 1448A / Race 6) (Pseudomonas syringae pv. phaseolicola (strain 1448A / Race 6)), this protein is NADPH-dependent 7-cyano-7-deazaguanine reductase.